We begin with the raw amino-acid sequence, 263 residues long: Probable ribosomal RNA small subunit methyltransferase A (263 aa).

Residues L12, G37, E58, D83, and N100 each coordinate S-adenosyl-L-methionine.

This sequence belongs to the class I-like SAM-binding methyltransferase superfamily. rRNA adenine N(6)-methyltransferase family. RsmA subfamily.

The protein resides in the cytoplasm. In terms of biological role, specifically dimethylates two adjacent adenosines in the loop of a conserved hairpin near the 3'-end of 16S rRNA in the 30S particle. May play a critical role in biogenesis of 30S subunits. The protein is Probable ribosomal RNA small subunit methyltransferase A of Methanococcus maripaludis (strain C6 / ATCC BAA-1332).